A 175-amino-acid chain; its full sequence is uncharacterized protein (175 aa).

Residues 1 to 2 are Extracellular-facing; sequence ME. Residues 3–23 traverse the membrane as a helical segment; sequence SIILSIAIFIGVLLGTSVGAG. Residues 24 to 151 lie on the Cytoplasmic side of the membrane; the sequence is SGSSISPDVD…TGISTTMNAR (128 aa). The interval 26-88 is disordered; it reads SSISPDVDAG…DVGAGSGSSI (63 aa). The segment covering 59–78 has biased composition (polar residues); sequence FSGSSTSPDVDAGSGSSTSP. A helical membrane pass occupies residues 152-172; sequence VAVLITAAILSAPVTAIALLE. Residues 173–175 lie on the Extracellular side of the membrane; sequence ARR.

The protein resides in the membrane. This is an uncharacterized protein from Saccharomyces cerevisiae (strain ATCC 204508 / S288c) (Baker's yeast).